Here is a 1167-residue protein sequence, read N- to C-terminus: MEFLRGGAALLQLLLVLSISRCCSTDPDRKVCQGTSNQMTMLDNHYLKMKKMYSGCNVVLENLEITYTQENQDLSFLQSIQEVGGYVLIAMNEVSTIPLVNLRLIRGQNLYEGNFTLLVMSNYQKNPSSPDVYQVGLKQLQLSNLTEILSGGVKVSHNPLLCNVETINWWDIVDKTSNPTMNLIPHAFERQCQKCDHGCVNGSCWAPGPGHCQKFTKLLCAEQCNRRCRGPKPIDCCNEHCAGGCTGPRATDCLACRDFNDDGTCKDTCPPPKIYDIVSHQVVDNPNIKYTFGAACVKECPSNYVVTEGACVRSCSAGMLEVDENGKRSCKPCDGVCPKVCDGIGIGSLSNTIAVNSTNIRSFSNCTKINGDIILNRNSFEGDPHYKIGTMDPEHLWNLTTVKEITGYLVIMWWPENMTSLSVFQNLEIIRGRTTFSRGFSFVVVQVRHLQWLGLRSLKEVSAGNVILKNTLQLRYANTINWRRLFRSEDQSIEYDARTENQTCNNECSEDGCWGPGPTMCVSCLHVDRGGRCVASCNLLQGEPREAQVDGRCVQCHQECLVQTDSLTCYGPGPANCSKSAHFQDGPQCIPRCPHGILGDGDTLIWKYADKMGQCQPCHQNCTQGCSGPGLSGCRGDIVSHSSLAVGLVSGLLITVIVALLIVVLLRRRRIKRKRTIRCLLQEKELVEPLTPSGQAPNQAFLRILKETEFKKDRVLGSGAFGTVYKGLWNPDGENIRIPVAIKVLREATSPKVNQEVLDEAYVMASVDHPHVCRLLGICLTSAVQLVTQLMPYGCLLDYVRQHQERICGQWLLNWCVQIAKGMNYLEERHLVHRDLAARNVLLKNPNHVKITDFGLSKLLTADEKEYQADGGKVPIKWMALESILQWTYTHQSDVWSYGVTVWELMTFGSKPYDGIPAKEIASVLENGERLPQPPICTIEVYMIILKCWMIDPSSRPRFRELVGEFSQMARDPSRYLVIQGNLPSLSDRRLFSRLLSSDDDVVDADEYLLPYKRINRQGSEPCIPPTGHPVRENSITLRNISDPTQNALEKDLDGHEYVNQPGSETSSRLSDIYNPNYEDLTDGWGPVSLSSQEAETNFSRPEYLNTNQNSLPLVSSGSMDDPDYQAGYQAAFLPQTGALTGNGMFLPAAENLEYLGQGGALYTPVR.

A signal peptide spans 1–25 (MEFLRGGAALLQLLLVLSISRCCST). Over 26–642 (DPDRKVCQGT…GCRGDIVSHS (617 aa)) the chain is Extracellular. N-linked (GlcNAc...) asparagine glycans are attached at residues N114, N144, and N201. 11 disulfide bridges follow: C195/C204, C199/C212, C220/C228, C224/C236, C237/C245, C241/C253, C256/C265, C269/C296, C300/C311, C315/C330, and C333/C337. N-linked (GlcNAc...) asparagine glycans are attached at residues N356, N365, N398, N417, and N501. Disulfide bonds link C504–C513, C508–C521, C524–C533, C537–C553, C556–C569, C560–C577, C593–C615, C618–C626, and C622–C634. Residue N576 is glycosylated (N-linked (GlcNAc...) asparagine). N-linked (GlcNAc...) asparagine glycosylation occurs at N621. Residues 643 to 665 (SLAVGLVSGLLITVIVALLIVVL) traverse the membrane as a helical segment. At 666 to 1167 (LRRRRIKRKR…QGGALYTPVR (502 aa)) the chain is on the cytoplasmic side. A Protein kinase domain is found at 710 to 977 (FKKDRVLGSG…QMARDPSRYL (268 aa)). ATP contacts are provided by residues 716-724 (LGSGAFGTV) and K743. Residue D835 is the Proton acceptor of the active site.

The protein belongs to the protein kinase superfamily. Tyr protein kinase family. EGF receptor subfamily.

Its subcellular location is the membrane. The enzyme catalyses L-tyrosyl-[protein] + ATP = O-phospho-L-tyrosyl-[protein] + ADP + H(+). Its function is as follows. Probable receptor with tyrosine-protein kinase activity. The chain is Melanoma receptor tyrosine-protein kinase (xmrk) from Xiphophorus maculatus (Southern platyfish).